Consider the following 310-residue polypeptide: Ribonuclease Z (310 aa).

Zn(2+) is bound by residues H63, H65, D67, H68, H141, D212, and H270. D67 functions as the Proton acceptor in the catalytic mechanism.

Belongs to the RNase Z family. As to quaternary structure, homodimer. Zn(2+) is required as a cofactor.

It catalyses the reaction Endonucleolytic cleavage of RNA, removing extra 3' nucleotides from tRNA precursor, generating 3' termini of tRNAs. A 3'-hydroxy group is left at the tRNA terminus and a 5'-phosphoryl group is left at the trailer molecule.. Zinc phosphodiesterase, which displays some tRNA 3'-processing endonuclease activity. Probably involved in tRNA maturation, by removing a 3'-trailer from precursor tRNA. The chain is Ribonuclease Z from Limosilactobacillus fermentum (strain NBRC 3956 / LMG 18251) (Lactobacillus fermentum).